We begin with the raw amino-acid sequence, 172 residues long: Sec-independent protein translocase protein TatB (172 aa).

Residues Met-1–Gly-21 traverse the membrane as a helical segment.

This sequence belongs to the TatB family. As to quaternary structure, the Tat system comprises two distinct complexes: a TatABC complex, containing multiple copies of TatA, TatB and TatC subunits, and a separate TatA complex, containing only TatA subunits. Substrates initially bind to the TatABC complex, which probably triggers association of the separate TatA complex to form the active translocon.

Its subcellular location is the cell inner membrane. Part of the twin-arginine translocation (Tat) system that transports large folded proteins containing a characteristic twin-arginine motif in their signal peptide across membranes. Together with TatC, TatB is part of a receptor directly interacting with Tat signal peptides. TatB may form an oligomeric binding site that transiently accommodates folded Tat precursor proteins before their translocation. In Rhodopseudomonas palustris (strain BisB18), this protein is Sec-independent protein translocase protein TatB.